The sequence spans 300 residues: 3-hydroxy-3-isohexenylglutaryl-CoA/hydroxy-methylglutaryl-CoA lyase (300 aa).

Residues 7-274 (VRLVEVGPRD…HTGVDMHALV (268 aa)) enclose the Pyruvate carboxyltransferase domain. Substrate is bound at residue arginine 15. A divalent metal cation-binding residues include aspartate 16, histidine 207, and histidine 209. Cysteine 240 is an active-site residue. Asparagine 249 provides a ligand contact to a divalent metal cation.

The protein belongs to the HMG-CoA lyase family. Homodimer. The cofactor is Mg(2+). Mn(2+) is required as a cofactor.

The enzyme catalyses 3-hydroxy-3-(4-methylpent-3-en-1-yl)glutaryl-CoA = 7-methyl-3-oxooct-6-enoyl-CoA + acetate. It carries out the reaction (3S)-3-hydroxy-3-methylglutaryl-CoA = acetoacetate + acetyl-CoA. It functions in the pathway metabolic intermediate metabolism; (S)-3-hydroxy-3-methylglutaryl-CoA degradation; acetoacetate from (S)-3-hydroxy-3-methylglutaryl-CoA: step 1/1. Functionally, involved in the L-leucine, isovalerate and acyclic monoterpene catabolism. Catalyzes the cleavage of 3-hydroxy-3-methylglutaryl-CoA (HMG-CoA) to yield acetyl-CoA and acetoacetate. It can also catalyze the cleavage of 3-hydroxy-3-isohexenylglutaryl-CoA (HIHG_CoA) to yield 7-methyl-3-oxooct-6-enoyl-CoA and acetate. The sequence is that of 3-hydroxy-3-isohexenylglutaryl-CoA/hydroxy-methylglutaryl-CoA lyase from Pseudomonas aeruginosa (strain ATCC 15692 / DSM 22644 / CIP 104116 / JCM 14847 / LMG 12228 / 1C / PRS 101 / PAO1).